Reading from the N-terminus, the 851-residue chain is DNA mismatch repair protein MutS (851 aa).

614 to 621 lines the ATP pocket; it reads GPNMGGKS.

Belongs to the DNA mismatch repair MutS family.

This protein is involved in the repair of mismatches in DNA. It is possible that it carries out the mismatch recognition step. This protein has a weak ATPase activity. The sequence is that of DNA mismatch repair protein MutS from Yersinia enterocolitica serotype O:8 / biotype 1B (strain NCTC 13174 / 8081).